The sequence spans 341 residues: uncharacterized protein (341 aa).

Belongs to the cycloisomerase 2 family.

This is an uncharacterized protein from Lactococcus lactis subsp. lactis (strain IL1403) (Streptococcus lactis).